Reading from the N-terminus, the 819-residue chain is DNA topoisomerase 4 subunit A (819 aa).

The 467-residue stretch at 30–496 folds into the Topo IIA-type catalytic domain; it reads LPDIRDGLKP…QIIEIDTASL (467 aa). Residue Tyr118 is the O-(5'-phospho-DNA)-tyrosine intermediate of the active site.

It belongs to the type II topoisomerase GyrA/ParC subunit family. ParC type 2 subfamily. Heterotetramer composed of ParC and ParE.

It is found in the cell membrane. The catalysed reaction is ATP-dependent breakage, passage and rejoining of double-stranded DNA.. In terms of biological role, topoisomerase IV is essential for chromosome segregation. It relaxes supercoiled DNA. Performs the decatenation events required during the replication of a circular DNA molecule. This Streptococcus pyogenes serotype M1 protein is DNA topoisomerase 4 subunit A.